We begin with the raw amino-acid sequence, 523 residues long: Factor arrest protein 8 (523 aa).

Positions 26–76 (TKNERDRITWELERSEMKARIAELEGENRDLKHQLNQIQSKAVSPEGEKEE) form a coiled coil. Residues 61–80 (NQIQSKAVSPEGEKEEKHVP) are disordered. Residues 71-80 (EGEKEEKHVP) show a composition bias toward basic and acidic residues. Ser-115 bears the Phosphoserine mark. At Thr-132 the chain carries Phosphothreonine. A disordered region spans residues 150–171 (ALLDTKPNPKQGPSESPSPTKV). Residues 160–171 (QGPSESPSPTKV) show a composition bias toward polar residues.

Component of a complex at least composed of FAR3, FAR7, FAR8, FAR10, FAR11 and VPS64.

Its subcellular location is the cytoplasm. It localises to the endoplasmic reticulum. Participates in the control of the reentry into the cell cycle following pheromone treatment. The sequence is that of Factor arrest protein 8 (FAR8) from Saccharomyces cerevisiae (strain ATCC 204508 / S288c) (Baker's yeast).